Reading from the N-terminus, the 591-residue chain is Laccase (591 aa).

An N-terminal signal peptide occupies residues 1-20 (MPSFFRALFSGLIASQLSWA). 2 consecutive Plastocyanin-like domains span residues 66-189 (VRQY…IQID) and 198-356 (IDLG…HPTN). Asparagine 121 carries N-linked (GlcNAc...) asparagine glycosylation. 4 residues coordinate Cu cation: histidine 126, histidine 128, histidine 171, and histidine 173. 2 cysteine pairs are disulfide-bonded: cysteine 147-cysteine 571 and cysteine 332-cysteine 366. 4 N-linked (GlcNAc...) asparagine glycosylation sites follow: asparagine 234, asparagine 242, asparagine 265, and asparagine 323. N-linked (GlcNAc...) asparagine glycosylation is found at asparagine 407 and asparagine 425. A Plastocyanin-like 3 domain is found at 416-551 (GHPITQYVIN…AGLGNTFLEQ (136 aa)). Cu cation is bound by residues histidine 463, histidine 466, histidine 468, histidine 533, cysteine 534, histidine 535, and histidine 539.

It belongs to the multicopper oxidase family. Cu cation is required as a cofactor.

The protein localises to the secreted. It carries out the reaction 4 hydroquinone + O2 = 4 benzosemiquinone + 2 H2O. Functionally, lignin degradation and detoxification of lignin-derived products. This is Laccase (LAC-1) from Cryphonectria parasitica (Chestnut blight fungus).